A 326-amino-acid polypeptide reads, in one-letter code: tRNA-dihydrouridine(20a/20b) synthase [NAD(P)+] (326 aa).

FMN contacts are provided by residues 26–28 and glutamine 79; that span reads PMV. Cysteine 108 (proton donor) is an active-site residue. FMN contacts are provided by residues lysine 149, histidine 177, 208–210, and 232–233; these read NGD and AR.

The protein belongs to the Dus family. Dus4 subfamily. FMN is required as a cofactor.

It localises to the mitochondrion. The enzyme catalyses 5,6-dihydrouridine(20a) in tRNA + NADP(+) = uridine(20a) in tRNA + NADPH + H(+). It carries out the reaction 5,6-dihydrouridine(20a) in tRNA + NAD(+) = uridine(20a) in tRNA + NADH + H(+). It catalyses the reaction 5,6-dihydrouridine(20b) in tRNA + NAD(+) = uridine(20b) in tRNA + NADH + H(+). The catalysed reaction is 5,6-dihydrouridine(20b) in tRNA + NADP(+) = uridine(20b) in tRNA + NADPH + H(+). The enzyme catalyses a 5,6-dihydrouridine in mRNA + NAD(+) = a uridine in mRNA + NADH + H(+). It carries out the reaction a 5,6-dihydrouridine in mRNA + NADP(+) = a uridine in mRNA + NADPH + H(+). In terms of biological role, catalyzes the synthesis of dihydrouridine, a modified base found in the D-loop of most tRNAs. Also able to mediate dihydrouridylation of some mRNAs, thereby affecting their translation. This chain is tRNA-dihydrouridine(20a/20b) synthase [NAD(P)+], found in Schizosaccharomyces pombe (strain 972 / ATCC 24843) (Fission yeast).